The sequence spans 75 residues: Putative sulfur carrier protein MJ0990 (75 aa).

Cysteine 15 functions as the Cysteine persulfide intermediate in the catalytic mechanism.

It belongs to the sulfur carrier protein TusA family.

This chain is Putative sulfur carrier protein MJ0990, found in Methanocaldococcus jannaschii (strain ATCC 43067 / DSM 2661 / JAL-1 / JCM 10045 / NBRC 100440) (Methanococcus jannaschii).